The following is a 235-amino-acid chain: Vacuolar protein sorting-associated protein 60.1 (235 aa).

The disordered stretch occupies residues 1 to 29 (MRRVFGAKKNTEPPPSIQDASDRINKRGD). A compositionally biased stretch (basic and acidic residues) spans 20–29 (ASDRINKRGD). A coiled-coil region spans residues 99 to 148 (LKDAQQTMTALKSANKELKGMMKTVKIQDIDNLQDEMMDLMDVSSEIQES). Residues 175-235 (MGNETEADGM…PAVPRASLRG (61 aa)) are disordered.

This sequence belongs to the SNF7 family. As to quaternary structure, interacts with SKD1/VPS4 and LIP5. Interacts with VPS2.2.

It is found in the endosome. The protein resides in the multivesicular body membrane. In terms of biological role, probable peripherally associated component of the endosomal sorting required for transport complex III (ESCRT-III) which is involved in multivesicular bodies (MVBs) formation and sorting of endosomal cargo proteins into MVBs. This is Vacuolar protein sorting-associated protein 60.1 from Arabidopsis thaliana (Mouse-ear cress).